The sequence spans 224 residues: tRNA (guanine-N(7)-)-methyltransferase (224 aa).

Positions 56, 81, 108, and 131 each coordinate S-adenosyl-L-methionine. Aspartate 131 is an active-site residue. Substrate contacts are provided by residues lysine 135, aspartate 167, and 202-205 (TKFE).

This sequence belongs to the class I-like SAM-binding methyltransferase superfamily. TrmB family.

It carries out the reaction guanosine(46) in tRNA + S-adenosyl-L-methionine = N(7)-methylguanosine(46) in tRNA + S-adenosyl-L-homocysteine. The protein operates within tRNA modification; N(7)-methylguanine-tRNA biosynthesis. Functionally, catalyzes the formation of N(7)-methylguanine at position 46 (m7G46) in tRNA. The protein is tRNA (guanine-N(7)-)-methyltransferase of Nitrosomonas eutropha (strain DSM 101675 / C91 / Nm57).